We begin with the raw amino-acid sequence, 1037 residues long: MANYFIDRPVFAWVLAIIMMLAGGLAIMNLPVAQYPQIAPPTITVSATYPGADAQTVEDSVTQVIEQNMNGLDGLMYMSSTSDAAGNASITLTFETGTSPDIAQVQVQNKLQLAMPSLPEAVQQQGISVDKSSSNILMVAAFISDNGSLNQYDIADYVASNIKDPLSRTAGVGSVQLFGSEYAMRIWLDPQKLNKYNLVPSDVISQIKVQNNQISGGQLGGMPQAADQQLNASIIVQTRLQTPEEFGKILLKVQQDGSQVLLRDVARVELGAEDYSTVARYNGKPAAGIAIKLAAGANALDTSRAVKEELNRLSAYFPASLKTVYPYDTTPFIEISIQEVFKTLVEAIILVFLVMYLFLQNFRATIIPTIAVPVVILGTFAILSAVGFTINTLTMFGMVLAIGLLVDDAIVVVENVERVIAEDKLPPKEATHKSMGQIQRALVGIAVVLSAVFMPMAFMSGATGEIYRQFSITLISSMLLSVFVAMSLTPALCATILKAAPEGGHKPNALFARFNTLFEKSTQHYTDSTRSLLRCTGRYMVVYLLICAGMAVLFLRTPTSFLPEEDQGVFMTTAQLPSGATMVNTTKVLQQVTDYYLTKEKDNVQSVFTVGGFGFSGQGQNNGLAFISLKPWSERVGEENSVTAIIQRAMIALSSINKAVVFPFNLPAVAELGTASGFDMELLDNGNLGHEKLTQARNELLSLAAQSPNQVTGVRPNGLEDTPMFKVNVNAAKAEAMGVALSDINQTISTAFGSSYVNDFLNQGRVKKVYVQAGTPFRMLPDNINQWYVRNASGTMAPLSAYSSTEWTYGSPRLERYNGIPSMEILGEAAAGKSTGDAMKFMADLVAKLPAGVGYSWTGLSYQEALSSNQAPALYAISLVVVFLALAALYESWSIPFSVMLVVPLGVVGALLATDLRGLSNDVYFQVGLLTTIGLSAKNAILIVEFAVEMMQKEGKTPIEAIIEAARMRLRPILMTSLAFILGVLPLVISHGAGSGAQNAVGTGVMGGMFAATVLAIYFVPVFFVVVEHLFARFKKA.

Residues 1-9 (MANYFIDRP) are Cytoplasmic-facing. Residues 10 to 28 (VFAWVLAIIMMLAGGLAIM) form a helical membrane-spanning segment. Topologically, residues 29-339 (NLPVAQYPQI…TPFIEISIQE (311 aa)) are periplasmic. Residues 340-359 (VFKTLVEAIILVFLVMYLFL) traverse the membrane as a helical segment. The Cytoplasmic segment spans residues 360 to 365 (QNFRAT). Residues 366-385 (IIPTIAVPVVILGTFAILSA) form a helical membrane-spanning segment. Residues 386–391 (VGFTIN) lie on the Periplasmic side of the membrane. The chain crosses the membrane as a helical span at residues 392–413 (TLTMFGMVLAIGLLVDDAIVVV). Topologically, residues 414–441 (ENVERVIAEDKLPPKEATHKSMGQIQRA) are cytoplasmic. Residues 442–460 (LVGIAVVLSAVFMPMAFMS) form a helical membrane-spanning segment. The Periplasmic portion of the chain corresponds to 461–473 (GATGEIYRQFSIT). Residues 474-496 (LISSMLLSVFVAMSLTPALCATI) traverse the membrane as a helical segment. Residues 497-536 (LKAAPEGGHKPNALFARFNTLFEKSTQHYTDSTRSLLRCT) lie on the Cytoplasmic side of the membrane. A helical transmembrane segment spans residues 537–555 (GRYMVVYLLICAGMAVLFL). Over 556-870 (RTPTSFLPEE…SYQEALSSNQ (315 aa)) the chain is Periplasmic. A helical membrane pass occupies residues 871–890 (APALYAISLVVVFLALAALY). The Cytoplasmic portion of the chain corresponds to 891 to 896 (ESWSIP). Residues 897–916 (FSVMLVVPLGVVGALLATDL) traverse the membrane as a helical segment. Residues 917 to 922 (RGLSND) lie on the Periplasmic side of the membrane. The chain crosses the membrane as a helical span at residues 923-944 (VYFQVGLLTTIGLSAKNAILIV). The Cytoplasmic segment spans residues 945-972 (EFAVEMMQKEGKTPIEAIIEAARMRLRP). The chain crosses the membrane as a helical span at residues 973 to 991 (ILMTSLAFILGVLPLVISH). The Periplasmic portion of the chain corresponds to 992-1004 (GAGSGAQNAVGTG). A helical transmembrane segment spans residues 1005 to 1027 (VMGGMFAATVLAIYFVPVFFVVV). The Cytoplasmic segment spans residues 1028 to 1037 (EHLFARFKKA).

It belongs to the resistance-nodulation-cell division (RND) (TC 2.A.6) family. In terms of assembly, homotrimer. Part of the tripartite efflux system MdtEF-TolC, which is composed of an inner membrane transporter, MdtF, a membrane fusion protein, MdtE, and an outer membrane component, TolC. The complex forms a large protein conduit and can translocate molecules across both the inner and outer membranes.

Its subcellular location is the cell inner membrane. In terms of biological role, part of the tripartite efflux system MdtEF-TolC, which confers resistance to compounds such as rhodamine 6G, erythromycin, doxorubicin, ethidium bromide, TPP, SDS, deoxycholate, crystal violet and benzalkonium. The chain is Multidrug resistance protein MdtF (mdtF) from Escherichia coli (strain K12).